A 372-amino-acid chain; its full sequence is Mitogen-activated protein kinase homolog NTF3 (372 aa).

The Protein kinase domain maps to 32–319; the sequence is YVPIKPIGRG…VIEALQHPYM (288 aa). ATP-binding positions include 38–46 and Lys-61; that span reads IGRGAYGIV. Catalysis depends on Asp-158, which acts as the Proton acceptor. Position 191 is a phosphothreonine (Thr-191). The short motif at 191-193 is the TXY element; the sequence is TEY. A Phosphotyrosine modification is found at Tyr-193.

The protein belongs to the protein kinase superfamily. CMGC Ser/Thr protein kinase family. MAP kinase subfamily. Mg(2+) is required as a cofactor. Post-translationally, dually phosphorylated on Thr-191 and Tyr-193, which activates the enzyme. Very low autophosphorylation, although dramatically increased when Mn(2+) is added to the reaction instead of Mg(2+). As to expression, ubiquitous.

It carries out the reaction L-seryl-[protein] + ATP = O-phospho-L-seryl-[protein] + ADP + H(+). The catalysed reaction is L-threonyl-[protein] + ATP = O-phospho-L-threonyl-[protein] + ADP + H(+). Activated by tyrosine and threonine phosphorylation. The chain is Mitogen-activated protein kinase homolog NTF3 (NTF3) from Nicotiana tabacum (Common tobacco).